The primary structure comprises 651 residues: Probable potassium transport system protein Kup (651 aa).

Helical transmembrane passes span 41-61, 82-102, 130-150, 163-183, 194-214, 235-255, 276-296, 309-329, 366-386, 395-415, 426-446, and 450-470; these read LVLGALGVVYGDIGTSPIYAF, VVSLIFWALTLVVTVKYVLFV, LILGVGICGAALFFGDAVITP, IVAPNLTPFVVPATVVILVTL, VAIVFGPIMALWFVALGASGL, FLTVSPAVAFVTVGAVFLAMT, WLWIVFPCLLLNYFGQAAFIL, MIPSFALWPMVLLATAATVIA, IYIPRVNLLLGLAVVILVLGF, AYGIAVTGNMLVTTVLLYIVM, ALPIILGFLVIDMLFFSANII, and EGGWASIGIATVLVLIMWTWV.

Belongs to the HAK/KUP transporter (TC 2.A.72) family.

It is found in the cell inner membrane. It catalyses the reaction K(+)(in) + H(+)(in) = K(+)(out) + H(+)(out). Its function is as follows. Transport of potassium into the cell. Likely operates as a K(+):H(+) symporter. The protein is Probable potassium transport system protein Kup of Brucella melitensis biotype 2 (strain ATCC 23457).